Reading from the N-terminus, the 341-residue chain is MKALSKLKAEEGIWMTDVPQPELGHNDIMIKIRKTAICGTDVHIYNWDEWSQKTIPVPMVVGHEYVGEVVAIGQEVKGFTVGDRVSGEGHITCGHCRNCRGGRTHLCRNTTGVGVNRPGSFAEYLVIPAFNAFKIPDNISDELASIFDPFGNAVHTALSFDLVGEDVLVSGAGPIGIMAAAVCKHVGARHVVITDVNEYRLDLARKMGVTRAVNVSKENLNDVMAELGMTEGFDVGLEMSGAPPAFRTLLNAMNHGGRIAMLGIPPSDMSIDWNQVIFKGLFIKGIYGREMFETWYKMAALIQSGLDLTPIITHRFTIDQFQQGFDAMRSGQSGKVVLSWD.

A Zn(2+)-binding site is contributed by cysteine 38. Catalysis depends on charge relay system residues threonine 40 and histidine 43. The Zn(2+) site is built by histidine 63, glutamate 64, cysteine 93, cysteine 96, cysteine 99, and cysteine 107. NAD(+) contacts are provided by residues isoleucine 175, aspartate 195, arginine 200, 262–264 (LGI), and 286–287 (IY).

Belongs to the zinc-containing alcohol dehydrogenase family. As to quaternary structure, homotetramer. Zn(2+) serves as cofactor.

Its subcellular location is the cytoplasm. The catalysed reaction is L-threonine + NAD(+) = (2S)-2-amino-3-oxobutanoate + NADH + H(+). Its pathway is amino-acid degradation; L-threonine degradation via oxydo-reductase pathway; glycine from L-threonine: step 1/2. Catalyzes the NAD(+)-dependent oxidation of L-threonine to 2-amino-3-ketobutyrate. This chain is L-threonine 3-dehydrogenase, found in Serratia proteamaculans (strain 568).